A 274-amino-acid polypeptide reads, in one-letter code: Nitrogenase iron protein (274 aa).

ATP is bound at residue 8 to 15 (GKGGIGKS). Cys94 contributes to the [4Fe-4S] cluster binding site. Arg97 carries the post-translational modification ADP-ribosylarginine; by dinitrogenase reductase ADP-ribosyltransferase. Cys131 is a [4Fe-4S] cluster binding site.

Belongs to the NifH/BchL/ChlL family. As to quaternary structure, homodimer. It depends on [4Fe-4S] cluster as a cofactor. The reversible ADP-ribosylation of Arg-97 inactivates the nitrogenase reductase and regulates nitrogenase activity.

It catalyses the reaction N2 + 8 reduced [2Fe-2S]-[ferredoxin] + 16 ATP + 16 H2O = H2 + 8 oxidized [2Fe-2S]-[ferredoxin] + 2 NH4(+) + 16 ADP + 16 phosphate + 6 H(+). Functionally, the key enzymatic reactions in nitrogen fixation are catalyzed by the nitrogenase complex, which has 2 components: the iron protein and the molybdenum-iron protein. The polypeptide is Nitrogenase iron protein (Chlorobaculum parvum (strain DSM 263 / NCIMB 8327) (Chlorobium vibrioforme subsp. thiosulfatophilum)).